We begin with the raw amino-acid sequence, 264 residues long: Thymidylate synthase (264 aa).

R21 contributes to the dUMP binding site. H51 serves as a coordination point for (6R)-5,10-methylene-5,6,7,8-tetrahydrofolate. A dUMP-binding site is contributed by 126 to 127 (RR). C146 (nucleophile) is an active-site residue. DUMP-binding positions include 166 to 169 (RSAD), N177, and 207 to 209 (HIY). Residue D169 participates in (6R)-5,10-methylene-5,6,7,8-tetrahydrofolate binding. A (6R)-5,10-methylene-5,6,7,8-tetrahydrofolate-binding site is contributed by A263.

It belongs to the thymidylate synthase family. Bacterial-type ThyA subfamily. As to quaternary structure, homodimer.

It is found in the cytoplasm. It catalyses the reaction dUMP + (6R)-5,10-methylene-5,6,7,8-tetrahydrofolate = 7,8-dihydrofolate + dTMP. The protein operates within pyrimidine metabolism; dTTP biosynthesis. Catalyzes the reductive methylation of 2'-deoxyuridine-5'-monophosphate (dUMP) to 2'-deoxythymidine-5'-monophosphate (dTMP) while utilizing 5,10-methylenetetrahydrofolate (mTHF) as the methyl donor and reductant in the reaction, yielding dihydrofolate (DHF) as a by-product. This enzymatic reaction provides an intracellular de novo source of dTMP, an essential precursor for DNA biosynthesis. The protein is Thymidylate synthase of Agrobacterium fabrum (strain C58 / ATCC 33970) (Agrobacterium tumefaciens (strain C58)).